We begin with the raw amino-acid sequence, 394 residues long: uncharacterized protein (394 aa).

N-linked (GlcNAc...) asparagine glycans are attached at residues Asn-3, Asn-14, Asn-20, and Asn-25. 6 consecutive transmembrane segments (helical) span residues 64 to 84 (AVGI…LVNI), 101 to 121 (FIWI…YIDV), 133 to 153 (IFSF…WHVI), 180 to 200 (IFVV…MGFF), 228 to 248 (VLLA…SFVY), and 256 to 276 (WVGM…QFLE). Residues Asn-283 and Asn-286 are each glycosylated (N-linked (GlcNAc...) asparagine). Residues 291 to 311 (AGLVFGLGFCPPLILAYTVCI) form a helical membrane-spanning segment. An N-linked (GlcNAc...) asparagine glycan is attached at Asn-344.

It localises to the membrane. This is an uncharacterized protein from Schizosaccharomyces pombe (strain 972 / ATCC 24843) (Fission yeast).